The primary structure comprises 645 residues: Alkyldihydroxyacetonephosphate synthase, peroxisomal (645 aa).

The span at methionine 1–glycine 10 shows a compositional bias: low complexity. A peroxisome-targeting transit peptide spans methionine 1 to cysteine 45. The tract at residues methionine 1–lysine 72 is disordered. Over residues alanine 11–arginine 20 the composition is skewed to basic and acidic residues. Over residues alanine 50–threonine 69 the composition is skewed to low complexity. A phosphoserine mark is found at serine 52 and serine 57. At threonine 61 the chain carries Phosphothreonine. Lysine 89 is subject to N6-acetyllysine. Residues phenylalanine 189–threonine 371 enclose the FAD-binding PCMH-type domain. FAD-binding positions include proline 221–serine 227, aspartate 290–threonine 296, and threonine 303–serine 306. At lysine 334 the chain carries N6-acetyllysine. Glutamate 355–isoleucine 361 lines the FAD pocket. Arginine 502 contributes to the substrate binding site. Catalysis depends on tyrosine 565, which acts as the Proton donor/acceptor. Important for enzyme activity regions lie at residues histidine 602–histidine 604 and asparagine 641–leucine 645.

The protein belongs to the FAD-binding oxidoreductase/transferase type 4 family. As to quaternary structure, homodimer. FAD is required as a cofactor.

Its subcellular location is the peroxisome membrane. It is found in the peroxisome. It catalyses the reaction a long chain fatty alcohol + a 1-acylglycerone 3-phosphate = a 1-O-alkylglycerone 3-phosphate + a long-chain fatty acid + H(+). It carries out the reaction hexadecan-1-ol + 1-hexadecanoylglycerone 3-phosphate = 1-O-hexadecylglycerone 3-phosphate + hexadecanoate + H(+). The enzyme catalyses 1-hexadecanoylglycerone 3-phosphate + a long-chain fatty acid = a 1-acylglycerone 3-phosphate + hexadecanoate. Its pathway is glycerolipid metabolism; ether lipid biosynthesis. In terms of biological role, catalyzes the exchange of the acyl chain in acyl-dihydroxyacetonephosphate (acyl-DHAP) for a long chain fatty alcohol, yielding the first ether linked intermediate, i.e. alkyl-dihydroxyacetonephosphate (alkyl-DHAP), in the pathway of ether lipid biosynthesis. The chain is Alkyldihydroxyacetonephosphate synthase, peroxisomal (Agps) from Mus musculus (Mouse).